Here is a 165-residue protein sequence, read N- to C-terminus: V-type proton ATPase subunit c2 (165 aa).

At 1–12 (MASTFSGDETAP) the chain is on the lumenal side. Residues 13-33 (FFGFLGAAAALVFSCMGAAYG) traverse the membrane as a helical segment. Over 34–55 (TAKSGVGVASMGVMRPELVMKS) the chain is Cytoplasmic. Residues 56-76 (IVPVVMAGVLGIYGLIIAVII) traverse the membrane as a helical segment. Topologically, residues 77–95 (STGINPKAKSYYLFDGYAH) are lumenal. A helical transmembrane segment spans residues 96–117 (LSSGLACGLAGLSAGMAIGIVG). Topologically, residues 118–129 (DAGVRANAQQPK) are cytoplasmic. A helical membrane pass occupies residues 130-155 (LFVGMILILIFAEALALYGLIVGIIL). Residues 156–165 (SSRAGQSRAE) lie on the Lumenal side of the membrane.

Belongs to the V-ATPase proteolipid subunit family. In terms of assembly, V-ATPase is a heteromultimeric enzyme composed of a peripheral catalytic V1 complex (components A to H) attached to an integral membrane V0 proton pore complex (components: a, c, c'', d and e). The proteolipid components c and c'' are present as a hexameric ring that forms the proton-conducting pore. In terms of tissue distribution, expressed in leaf, root, flower and silique, with lower expression in roots.

It localises to the vacuole membrane. Functionally, proton-conducting pore forming subunit of the membrane integral V0 complex of vacuolar ATPase. V-ATPase is responsible for acidifying a variety of intracellular compartments in eukaryotic cells. In Arabidopsis thaliana (Mouse-ear cress), this protein is V-type proton ATPase subunit c2 (VHA-c2).